Reading from the N-terminus, the 149-residue chain is 3-dehydroquinate dehydratase (149 aa).

Tyrosine 22 (proton acceptor) is an active-site residue. 3 residues coordinate substrate: asparagine 73, histidine 79, and aspartate 86. Histidine 99 acts as the Proton donor in catalysis. Residues 100-101 and arginine 110 contribute to the substrate site; that span reads LS.

It belongs to the type-II 3-dehydroquinase family. In terms of assembly, homododecamer.

The enzyme catalyses 3-dehydroquinate = 3-dehydroshikimate + H2O. Its pathway is metabolic intermediate biosynthesis; chorismate biosynthesis; chorismate from D-erythrose 4-phosphate and phosphoenolpyruvate: step 3/7. Its function is as follows. Catalyzes a trans-dehydration via an enolate intermediate. The polypeptide is 3-dehydroquinate dehydratase (Prochlorococcus marinus (strain MIT 9313)).